Here is a 282-residue protein sequence, read N- to C-terminus: MFVRKSCYSLINATRRCLRYRQLSSTTAGTVGTTAPTANISLNDEPQPAAAEMDEFTKEFLRNRIEVSDIQRLILSAGSSVAALVDPRRHDMIACLGETTGREALEKILHYMRSTEEGQRILVEKPRINTRTVDMEALKKMPEHTFGYTYVKFMEDNNITPDSRMEVRFLDEPGLAYVMTRYRETHDMVHAILDMPTNMLGEVTVKWVEALNTGLPMCYGGAVFGAFRLRTKQRQNYLRKYLPWALRTGNRIKPLMGVYWEKRWEQDVTELRKELNIELLAP.

Residues 1-30 constitute a mitochondrion transit peptide; it reads MFVRKSCYSLINATRRCLRYRQLSSTTAGT. Zn(2+) contacts are provided by histidine 186, aspartate 187, histidine 190, and glutamate 202.

This sequence belongs to the COQ4 family. As to quaternary structure, component of a multi-subunit COQ enzyme complex. Requires Zn(2+) as cofactor.

The protein resides in the mitochondrion inner membrane. It catalyses the reaction a 4-hydroxy-3-methoxy-5-(all-trans-polyprenyl)benzoate + H(+) = a 2-methoxy-6-(all-trans-polyprenyl)phenol + CO2. The protein operates within cofactor biosynthesis; ubiquinone biosynthesis. Functionally, lyase that catalyzes the C1-decarboxylation of 4-hydroxy-3-methoxy-5-(all-trans-polyprenyl)benzoic acid into 2-methoxy-6-(all-trans-polyprenyl)phenol during ubiquinone biosynthesis. This is Ubiquinone biosynthesis protein COQ4 homolog, mitochondrial from Anopheles gambiae (African malaria mosquito).